A 504-amino-acid polypeptide reads, in one-letter code: One cut domain family member 2 (504 aa).

Disordered stretches follow at residues 29–95, 166–189, 274–332, and 485–504; these read LGTL…GTAA, KFHH…RLSG, EQHL…QLEE, and WQDD…CTKA. Gly residues predominate over residues 35–56; it reads PAGGGSGGGGGGGGGGGGGGPG. Residues 168 to 186 are compositionally biased toward basic residues; the sequence is HHPHPHHHPHHHHHHHHQR. Positions 324-410 form a DNA-binding region, CUT; the sequence is VATSGQLEEI…QRMSALRLAA (87 aa). Positions 426–485 form a DNA-binding region, homeobox; the sequence is QKKSRLVFTDLQRRTLFAIFKENKRPSKEMQITISQQLGLELTTVSNFFMNARRRSLEKW. Residues 490 to 504 show a composition bias toward low complexity; that stretch reads STGGSSSTSSTCTKA.

This sequence belongs to the CUT homeobox family.

It is found in the nucleus. Functionally, transcriptional activator. Activates the transcription of a number of liver genes such as HNF3B. This is One cut domain family member 2 (ONECUT2) from Homo sapiens (Human).